We begin with the raw amino-acid sequence, 307 residues long: Ribonuclease H2 subunit B (307 aa).

Alanine 2 bears the N-acetylalanine mark. The residue at position 291 (lysine 291) is an N6-acetyllysine. At serine 292 the chain carries Phosphoserine.

It belongs to the RNase H2 subunit B family. As to quaternary structure, the RNase H2 complex is a heterotrimer composed of the catalytic subunit RNASEH2A and the non-catalytic subunits RNASEH2B and RNASEH2C.

The protein localises to the nucleus. Functionally, non catalytic subunit of RNase H2, an endonuclease that specifically degrades the RNA of RNA:DNA hybrids. Participates in DNA replication, possibly by mediating the removal of lagging-strand Okazaki fragment RNA primers during DNA replication. Mediates the excision of single ribonucleotides from DNA:RNA duplexes. The sequence is that of Ribonuclease H2 subunit B (Rnaseh2b) from Rattus norvegicus (Rat).